Reading from the N-terminus, the 434-residue chain is [Arg8]-vasotocin receptor (434 aa).

Topologically, residues 1-27 are extracellular; it reads MGRIANQTTASNDTDPFGRNEEVAKME. 2 N-linked (GlcNAc...) asparagine glycosylation sites follow: asparagine 6 and asparagine 12. Residues 28 to 48 traverse the membrane as a helical segment; the sequence is ITVLSVTFFVAVIGNLSVLLA. Residues 49–67 lie on the Cytoplasmic side of the membrane; sequence MHNTKKKSSRMHLFIKHLS. The chain crosses the membrane as a helical span at residues 68 to 88; the sequence is LADMVVAFFQVLPQLCWEITF. The Extracellular portion of the chain corresponds to 89–98; sequence RFYGPDFLCR. Residues cysteine 97 and cysteine 176 are joined by a disulfide bond. The helical transmembrane segment at 99-119 threads the bilayer; sequence IVKHLQVLGMFASTYMMVMMT. The Cytoplasmic segment spans residues 120-141; it reads LDRYIAICHPLKTLQQPTQRAY. A helical membrane pass occupies residues 142-162; that stretch reads IMIGSTWLCSLLLSTPQYFIF. Topologically, residues 163–191 are extracellular; the sequence is SLSEIQNGSYVYDCWGHFIEPWGIRAYIT. The helical transmembrane segment at 192–212 threads the bilayer; that stretch reads WITVGIFLIPVIILMICYGFI. The Cytoplasmic portion of the chain corresponds to 213 to 257; the sequence is CHSIWKNIKCKTMRGTRNTKDGMIGKVSVSSVTIISRAKLRTVKM. Residues 258 to 278 form a helical membrane-spanning segment; it reads TLVIVLAYIVCWAPFFIVQMW. Over 279–295 the chain is Extracellular; the sequence is SVWDENFSWDDSENAAV. Residues 296-316 form a helical membrane-spanning segment; that stretch reads TLSALLASLNSCCNPWIYMLF. Residues 317 to 434 lie on the Cytoplasmic side of the membrane; sequence SGHLLYDFLR…KSSQCMSKES (118 aa).

Belongs to the G-protein coupled receptor 1 family. Vasopressin/oxytocin receptor subfamily. As to expression, expressed in pituitary, liver, gills, swim bladder and lateral line.

The protein resides in the cell membrane. Binds to vasotocin. Produces an induction of membrane chloride currents indicating that it is coupled to the inositol phosphate/calcium pathway. The protein is [Arg8]-vasotocin receptor of Catostomus commersonii (White sucker).